The sequence spans 769 residues: Neprilysin-21 (769 aa).

Topologically, residues methionine 1–threonine 26 are cytoplasmic. Residues leucine 27 to leucine 47 traverse the membrane as a helical; Signal-anchor for type II membrane protein segment. Topologically, residues tryptophan 48 to tryptophan 769 are extracellular. A glycan (N-linked (GlcNAc...) asparagine) is linked at asparagine 69. The 685-residue stretch at valine 85 to tryptophan 769 folds into the Peptidase M13 domain. Cystine bridges form between cysteine 86–cysteine 91, cysteine 109–cysteine 754, cysteine 117–cysteine 714, cysteine 173–cysteine 428, and cysteine 638–cysteine 766. N-linked (GlcNAc...) asparagine glycosylation is found at asparagine 221, asparagine 240, asparagine 272, asparagine 307, asparagine 356, asparagine 412, and asparagine 506. Position 601 (histidine 601) interacts with Zn(2+). Residue glutamate 602 is part of the active site. Histidine 605 and glutamate 663 together coordinate Zn(2+). Aspartate 667 serves as the catalytic Proton donor. N-linked (GlcNAc...) asparagine glycosylation is found at asparagine 684 and asparagine 698.

Belongs to the peptidase M13 family. Zn(2+) is required as a cofactor.

It localises to the cell membrane. In terms of biological role, probable cell surface protease. The chain is Neprilysin-21 (nep-21) from Caenorhabditis elegans.